A 494-amino-acid chain; its full sequence is Poly(3-hydroxybutyrate) depolymerase (494 aa).

Residues 1–25 form the signal peptide; it reads MAFNFIRAAAAGAAMALCGVGSVHA. S45 serves as the catalytic Nucleophile. Residues D132 and H166 each act as charge relay system in the active site. Residues 347 to 431 enclose the Fibronectin type-III domain; that stretch reads APTGVSTSGA…AAASGTTLAA (85 aa).

It belongs to the AB hydrolase superfamily. Lipase family.

The protein resides in the secreted. The enzyme catalyses [(3R)-hydroxybutanoate](n) + H2O = [(3R)-hydroxybutanoate](n-2) + (3R)-hydroxybutanoate dimer + H(+). It catalyses the reaction [(3R)-hydroxybutanoate](n) + H2O = [(3R)-hydroxybutanoate](n-1) + (R)-3-hydroxybutanoate + H(+). It carries out the reaction (3R)-hydroxybutanoate dimer + H2O = 2 (R)-3-hydroxybutanoate + H(+). Functionally, catalyzes the hydrolysis of poly(3-hydroxybutyrate) (PHB) film, producing the monomer and dimer of 3-hydroxybutyrate (3HB), while the 3HB trimer and tetramer are not formed. This is Poly(3-hydroxybutyrate) depolymerase from Delftia acidovorans (Pseudomonas acidovorans).